The following is a 471-amino-acid chain: Glutamate--tRNA ligase 2 (471 aa).

The 'HIGH' region signature appears at 15 to 25 (PSPTGYLHIGG). Positions 243 to 247 (KLSKR) match the 'KMSKS' region motif. Lysine 246 provides a ligand contact to ATP.

The protein belongs to the class-I aminoacyl-tRNA synthetase family. Glutamate--tRNA ligase type 1 subfamily. In terms of assembly, monomer.

Its subcellular location is the cytoplasm. The catalysed reaction is tRNA(Glu) + L-glutamate + ATP = L-glutamyl-tRNA(Glu) + AMP + diphosphate. Its function is as follows. Catalyzes the attachment of glutamate to tRNA(Glu) in a two-step reaction: glutamate is first activated by ATP to form Glu-AMP and then transferred to the acceptor end of tRNA(Glu). This is Glutamate--tRNA ligase 2 from Cereibacter sphaeroides (strain ATCC 17025 / ATH 2.4.3) (Rhodobacter sphaeroides).